We begin with the raw amino-acid sequence, 101 residues long: Urease subunit beta (101 aa).

The protein belongs to the urease beta subunit family. As to quaternary structure, heterotrimer of UreA (gamma), UreB (beta) and UreC (alpha) subunits. Three heterotrimers associate to form the active enzyme.

It localises to the cytoplasm. The catalysed reaction is urea + 2 H2O + H(+) = hydrogencarbonate + 2 NH4(+). The protein operates within nitrogen metabolism; urea degradation; CO(2) and NH(3) from urea (urease route): step 1/1. In Cupriavidus pinatubonensis (strain JMP 134 / LMG 1197) (Cupriavidus necator (strain JMP 134)), this protein is Urease subunit beta.